Here is a 728-residue protein sequence, read N- to C-terminus: 1,4-alpha-glucan branching enzyme GlgB (728 aa).

D405 serves as the catalytic Nucleophile. E458 serves as the catalytic Proton donor.

Belongs to the glycosyl hydrolase 13 family. GlgB subfamily. Monomer.

The catalysed reaction is Transfers a segment of a (1-&gt;4)-alpha-D-glucan chain to a primary hydroxy group in a similar glucan chain.. It participates in glycan biosynthesis; glycogen biosynthesis. Its function is as follows. Catalyzes the formation of the alpha-1,6-glucosidic linkages in glycogen by scission of a 1,4-alpha-linked oligosaccharide from growing alpha-1,4-glucan chains and the subsequent attachment of the oligosaccharide to the alpha-1,6 position. The polypeptide is 1,4-alpha-glucan branching enzyme GlgB (Shigella dysenteriae serotype 1 (strain Sd197)).